Consider the following 630-residue polypeptide: Protein mono-ADP-ribosyltransferase PARP6 (630 aa).

Cys237 bears the ADP-ribosylcysteine mark. A PARP catalytic domain is found at 394-620 (EMTQGSYLEI…QDPKIQKEIM (227 aa)). At Asp600 the chain carries ADP-ribosyl aspartic acid.

Belongs to the ARTD/PARP family. In terms of processing, auto-mono-ADP-ribosylated.

The catalysed reaction is L-aspartyl-[protein] + NAD(+) = 4-O-(ADP-D-ribosyl)-L-aspartyl-[protein] + nicotinamide. The enzyme catalyses L-cysteinyl-[protein] + NAD(+) = S-(ADP-D-ribosyl)-L-cysteinyl-[protein] + nicotinamide + H(+). In terms of biological role, mono-ADP-ribosyltransferase that mediates mono-ADP-ribosylation of target proteins. This chain is Protein mono-ADP-ribosyltransferase PARP6, found in Homo sapiens (Human).